A 142-amino-acid polypeptide reads, in one-letter code: Extracellular globin-1 (142 aa).

Residues 1-142 enclose the Globin domain; that stretch reads ECLVTEGLKV…DQIIDGIKDI (142 aa). Residues cysteine 2 and cysteine 131 are joined by a disulfide bond. Histidine 94 lines the heme b pocket.

The protein belongs to the globin family. In terms of assembly, the extracellular hemoglobin of the earthworm consists of 12 subunits that have a hexagonal bilayer structure with a molecular weight near 3.8 million. Each one-twelfth subunit is composed primarily of disulfide linked trimers (chains A, B, and C) and monomers (chain D).

In Lumbricus terrestris (Common earthworm), this protein is Extracellular globin-1.